A 72-amino-acid chain; its full sequence is MSKVCVLTGKRPKYGNNVSHANNHTRTRFEPNLHTKRIWIEEERRWVKVRLTAKAMKIMSKTGTAELAKLLK.

The protein belongs to the bacterial ribosomal protein bL28 family.

This Chlorobaculum tepidum (strain ATCC 49652 / DSM 12025 / NBRC 103806 / TLS) (Chlorobium tepidum) protein is Large ribosomal subunit protein bL28.